The primary structure comprises 2606 residues: Large tegument protein deneddylase (2606 aa).

The tract at residues 1 to 235 (MAFQAQTDTG…LKRSGAYVNL (235 aa)) is deubiquitination activity. The Peptidase C76 domain occupies 14-225 (LATASSHQGD…LLANYGIASA (212 aa)). Active-site residues include C34, D163, and H165. Disordered regions lie at residues 318–349 (IAIS…PNEA), 390–411 (DTDS…KSGQ), 1020–1135 (KKGL…ESSE), 2253–2316 (PEIH…PTPL), and 2434–2458 (PPHD…ERKY). The segment covering 1038–1050 (TPVTDSKLIQDSQ) has biased composition (polar residues). Positions 1051–1061 (QNDRHQKEKPL) are enriched in basic and acidic residues. Over residues 1085 to 1097 (KPQNLSLPVSTNK) the composition is skewed to polar residues. Positions 1105 to 1132 (ESSPIESTSPSHSPVSSMESQNGSFSLE) are enriched in low complexity. Pro residues predominate over residues 2304–2316 (PNPPRPTTFPTPL).

Belongs to the herpesviridae large tegument protein family. As to quaternary structure, interacts with host CUL1 and CUL4A; these interactions inhibit the E3 ligase activity of cullins. Interacts with inner tegument protein. Interacts with capsid vertex specific component CVC2. Interacts with the major capsid protein/MCP.

The protein localises to the virion tegument. Its subcellular location is the host cytoplasm. It is found in the host nucleus. It catalyses the reaction Thiol-dependent hydrolysis of ester, thioester, amide, peptide and isopeptide bonds formed by the C-terminal Gly of ubiquitin (a 76-residue protein attached to proteins as an intracellular targeting signal).. Large tegument protein that plays multiple roles in the viral cycle. During viral entry, remains associated with the capsid while most of the tegument is detached and participates in the capsid transport toward the host nucleus. Plays a role in the routing of the capsid at the nuclear pore complex and subsequent uncoating. Within the host nucleus, acts as a deneddylase and promotes the degradation of nuclear CRLs (cullin-RING ubiquitin ligases) and thereby stabilizes nuclear CRL substrates, while cytoplasmic CRLs remain unaffected. These modifications prevent host cell cycle S-phase progression and create a favorable environment allowing efficient viral genome replication. Participates later in the secondary envelopment of capsids. Indeed, plays a linker role for the association of the outer viral tegument to the capsids together with the inner tegument protein. This is Large tegument protein deneddylase (64) from Connochaetes taurinus (Blue wildebeest).